The sequence spans 640 residues: Probable potassium transport system protein Kup 3 (640 aa).

A compositionally biased stretch (low complexity) spans 1–15 (MTVDAAATPAEAPAT). The disordered stretch occupies residues 1–20 (MTVDAAATPAEAPATNGHGD). 12 consecutive transmembrane segments (helical) span residues 30–50 (LTLG…LYAL), 71–91 (VISL…VVIL), 117–137 (ASII…DAVI), 155–175 (AAFD…LFAV), 183–203 (VAAF…IAAF), 224–244 (FMLH…LAVT), 265–285 (WLFV…ALII), 294–314 (PFFL…ATVA), 363–383 (LLLA…ALAS), 385–405 (YGIS…VVIW), 410–430 (WSPL…LTFL), and 437–457 (VLEG…LMYT).

The protein belongs to the HAK/KUP transporter (TC 2.A.72) family.

The protein localises to the cell inner membrane. The enzyme catalyses K(+)(in) + H(+)(in) = K(+)(out) + H(+)(out). Its function is as follows. Transport of potassium into the cell. Likely operates as a K(+):H(+) symporter. This Bradyrhizobium sp. (strain BTAi1 / ATCC BAA-1182) protein is Probable potassium transport system protein Kup 3.